Reading from the N-terminus, the 238-residue chain is Uridylate kinase (238 aa).

An ATP-binding site is contributed by 12-15; that stretch reads KVSG. Position 54 (glycine 54) interacts with UMP. Positions 55 and 59 each coordinate ATP. Residues aspartate 74 and 135-142 each bind UMP; that span reads TGNPYFTT. ATP is bound by residues threonine 162, asparagine 163, tyrosine 168, and aspartate 171.

Belongs to the UMP kinase family. In terms of assembly, homohexamer.

It is found in the cytoplasm. The catalysed reaction is UMP + ATP = UDP + ADP. It participates in pyrimidine metabolism; CTP biosynthesis via de novo pathway; UDP from UMP (UMPK route): step 1/1. With respect to regulation, inhibited by UTP. Functionally, catalyzes the reversible phosphorylation of UMP to UDP. This is Uridylate kinase from Azorhizobium caulinodans (strain ATCC 43989 / DSM 5975 / JCM 20966 / LMG 6465 / NBRC 14845 / NCIMB 13405 / ORS 571).